Consider the following 542-residue polypeptide: CTP synthase (542 aa).

An amidoligase domain region spans residues 1–265; sequence MTRYIFVTGG…DQLVIERFGL (265 aa). Residue serine 13 coordinates CTP. Position 13 (serine 13) interacts with UTP. ATP is bound by residues 14-19 and aspartate 71; that span reads SLGKGI. Aspartate 71 and glutamate 139 together coordinate Mg(2+). Residues 146-148, 186-191, and lysine 222 contribute to the CTP site; these read DIE and KTKPTQ. UTP-binding positions include 186-191 and lysine 222; that span reads KTKPTQ. The 252-residue stretch at 290–541 folds into the Glutamine amidotransferase type-1 domain; it reads TIAMVGKYME…VEAALANKKG (252 aa). Glycine 351 contacts L-glutamine. Catalysis depends on cysteine 378, which acts as the Nucleophile; for glutamine hydrolysis. Residues 379–382, glutamate 402, and arginine 469 contribute to the L-glutamine site; that span reads LGMQ. Active-site residues include histidine 514 and glutamate 516.

It belongs to the CTP synthase family. Homotetramer.

The enzyme catalyses UTP + L-glutamine + ATP + H2O = CTP + L-glutamate + ADP + phosphate + 2 H(+). The catalysed reaction is L-glutamine + H2O = L-glutamate + NH4(+). It carries out the reaction UTP + NH4(+) + ATP = CTP + ADP + phosphate + 2 H(+). The protein operates within pyrimidine metabolism; CTP biosynthesis via de novo pathway; CTP from UDP: step 2/2. Its activity is regulated as follows. Allosterically activated by GTP, when glutamine is the substrate; GTP has no effect on the reaction when ammonia is the substrate. The allosteric effector GTP functions by stabilizing the protein conformation that binds the tetrahedral intermediate(s) formed during glutamine hydrolysis. Inhibited by the product CTP, via allosteric rather than competitive inhibition. Catalyzes the ATP-dependent amination of UTP to CTP with either L-glutamine or ammonia as the source of nitrogen. Regulates intracellular CTP levels through interactions with the four ribonucleotide triphosphates. This Marinobacter nauticus (strain ATCC 700491 / DSM 11845 / VT8) (Marinobacter aquaeolei) protein is CTP synthase.